Reading from the N-terminus, the 343-residue chain is Aspartate carbamoyltransferase catalytic subunit (343 aa).

Carbamoyl phosphate contacts are provided by Arg91 and Thr92. Lys119 contacts L-aspartate. The carbamoyl phosphate site is built by Arg141, His171, and Gln174. Positions 204 and 259 each coordinate L-aspartate. Carbamoyl phosphate-binding residues include Gly300 and Pro301.

This sequence belongs to the aspartate/ornithine carbamoyltransferase superfamily. ATCase family. Heterododecamer (2C3:3R2) of six catalytic PyrB chains organized as two trimers (C3), and six regulatory PyrI chains organized as three dimers (R2).

It catalyses the reaction carbamoyl phosphate + L-aspartate = N-carbamoyl-L-aspartate + phosphate + H(+). Its pathway is pyrimidine metabolism; UMP biosynthesis via de novo pathway; (S)-dihydroorotate from bicarbonate: step 2/3. Catalyzes the condensation of carbamoyl phosphate and aspartate to form carbamoyl aspartate and inorganic phosphate, the committed step in the de novo pyrimidine nucleotide biosynthesis pathway. This chain is Aspartate carbamoyltransferase catalytic subunit, found in Burkholderia mallei (strain NCTC 10247).